The following is a 296-amino-acid chain: Aspartate carbamoyltransferase catalytic subunit (296 aa).

Positions 50 and 51 each coordinate carbamoyl phosphate. An L-aspartate-binding site is contributed by lysine 79. Arginine 100, histidine 128, and glutamine 131 together coordinate carbamoyl phosphate. Positions 161 and 219 each coordinate L-aspartate. Carbamoyl phosphate-binding residues include leucine 258 and proline 259.

The protein belongs to the aspartate/ornithine carbamoyltransferase superfamily. ATCase family. In terms of assembly, heterooligomer of catalytic and regulatory chains.

The enzyme catalyses carbamoyl phosphate + L-aspartate = N-carbamoyl-L-aspartate + phosphate + H(+). The protein operates within pyrimidine metabolism; UMP biosynthesis via de novo pathway; (S)-dihydroorotate from bicarbonate: step 2/3. Functionally, catalyzes the condensation of carbamoyl phosphate and aspartate to form carbamoyl aspartate and inorganic phosphate, the committed step in the de novo pyrimidine nucleotide biosynthesis pathway. This chain is Aspartate carbamoyltransferase catalytic subunit, found in Korarchaeum cryptofilum (strain OPF8).